The sequence spans 23 residues: Testis ecdysiotropin peptide B (23 aa).

In terms of biological role, stimulates synthesis of ecdysteroid in the testes of larvae and pupae. The polypeptide is Testis ecdysiotropin peptide B (Lymantria dispar (Gypsy moth)).